The chain runs to 430 residues: Enolase (430 aa).

Residue glutamine 165 coordinates (2R)-2-phosphoglycerate. Glutamate 207 serves as the catalytic Proton donor. Residues aspartate 244, glutamate 287, and aspartate 314 each coordinate Mg(2+). Positions 339, 368, 369, and 390 each coordinate (2R)-2-phosphoglycerate. Lysine 339 serves as the catalytic Proton acceptor.

Belongs to the enolase family. In terms of assembly, component of the RNA degradosome, a multiprotein complex involved in RNA processing and mRNA degradation. It depends on Mg(2+) as a cofactor.

It localises to the cytoplasm. It is found in the secreted. Its subcellular location is the cell surface. The catalysed reaction is (2R)-2-phosphoglycerate = phosphoenolpyruvate + H2O. Its pathway is carbohydrate degradation; glycolysis; pyruvate from D-glyceraldehyde 3-phosphate: step 4/5. Functionally, catalyzes the reversible conversion of 2-phosphoglycerate (2-PG) into phosphoenolpyruvate (PEP). It is essential for the degradation of carbohydrates via glycolysis. The polypeptide is Enolase (Xanthomonas campestris pv. campestris (strain 8004)).